The following is a 215-amino-acid chain: Large ribosomal subunit protein uL3 (215 aa).

Position 156 is an N5-methylglutamine (Gln-156).

Belongs to the universal ribosomal protein uL3 family. As to quaternary structure, part of the 50S ribosomal subunit. Forms a cluster with proteins L14 and L19. In terms of processing, methylated by PrmB.

Functionally, one of the primary rRNA binding proteins, it binds directly near the 3'-end of the 23S rRNA, where it nucleates assembly of the 50S subunit. This Xylella fastidiosa (strain M12) protein is Large ribosomal subunit protein uL3.